Here is an 88-residue protein sequence, read N- to C-terminus: Phosphocarrier protein HPr (88 aa).

Residues Met1 to Glu88 form the HPr domain. Residue His15 is the Pros-phosphohistidine intermediate of the active site. Residue Ser46 is modified to Phosphoserine; by HPrK/P.

It belongs to the HPr family.

It is found in the cytoplasm. Its activity is regulated as follows. Phosphorylation on Ser-46 inhibits the phosphoryl transfer from enzyme I to HPr. Its function is as follows. General (non sugar-specific) component of the phosphoenolpyruvate-dependent sugar phosphotransferase system (sugar PTS). This major carbohydrate active-transport system catalyzes the phosphorylation of incoming sugar substrates concomitantly with their translocation across the cell membrane. The phosphoryl group from phosphoenolpyruvate (PEP) is transferred to the phosphoryl carrier protein HPr by enzyme I. Phospho-HPr then transfers it to the PTS EIIA domain. P-Ser-HPr interacts with the catabolite control protein A (CcpA), forming a complex that binds to DNA at the catabolite response elements cre, operator sites preceding a large number of catabolite-regulated genes. Thus, P-Ser-HPr is a corepressor in carbon catabolite repression (CCR), a mechanism that allows bacteria to coordinate and optimize the utilization of available carbon sources. P-Ser-HPr also plays a role in inducer exclusion, in which it probably interacts with several non-PTS permeases and inhibits their transport activity. This is Phosphocarrier protein HPr (ptsH) from Listeria monocytogenes serovar 1/2a (strain ATCC BAA-679 / EGD-e).